The following is a 576-amino-acid chain: uncharacterized protein (576 aa).

Topologically, residues 1–8 (MSLSLGAA) are cytoplasmic. A helical membrane pass occupies residues 9 to 29 (IYIALKPIFKIYTIMLVGYLV). Topologically, residues 30 to 45 (AKFDIVSMENAKGISN) are extracellular. A helical membrane pass occupies residues 46–66 (MVVNAILPCLTFNKIVSNISW). Topologically, residues 67-71 (RDIKE) are cytoplasmic. The helical transmembrane segment at 72-92 (IGVIILSAFILFVLGATGALF) threads the bilayer. Residues 93-103 (TTFATTVPKKF) lie on the Extracellular side of the membrane. A helical membrane pass occupies residues 104-124 (FWGLIFAGFFPNISDLPIAYI). The Cytoplasmic portion of the chain corresponds to 125–141 (QSMGNGSIFTAEEADKG). The helical transmembrane segment at 142 to 162 (VAYSCIFLFIQSFLMMNFGMW) threads the bilayer. The Extracellular segment spans residues 163-400 (RVVGLDFRDT…FIINCLRPAS (238 aa)). The chain crosses the membrane as a helical span at residues 401–421 (LGAILGIICALIPWVKACFVT). Residues 422 to 437 (TYVHVHKAPDGEPVLN) are Cytoplasmic-facing. The chain crosses the membrane as a helical span at residues 438–458 (FLMDFTEYIGNACVPLGLLLL). Over 459-476 (GGTLARLEIKSLPPGFIK) the chain is Extracellular. Residues 477–497 (SALLMTCFRLIVIPIIGVLWV) form a helical membrane-spanning segment. Residues 498-512 (NKLYSIDWLDTGIGK) are Cytoplasmic-facing. A helical membrane pass occupies residues 513 to 533 (FDMILTWSMPSATAQVYFTAF). The Extracellular segment spans residues 534–545 (YTPACGDHIQMN). A helical membrane pass occupies residues 546–566 (CLSVLFVMQYAILFITVAFVV). Residues 567 to 576 (TYTLKVDLKV) lie on the Cytoplasmic side of the membrane.

This sequence belongs to the auxin efflux carrier (TC 2.A.69) family.

It localises to the membrane. This is an uncharacterized protein from Saccharomyces cerevisiae (strain ATCC 204508 / S288c) (Baker's yeast).